An 809-amino-acid chain; its full sequence is Poly(A) polymerase (809 aa).

Residues 1–50 (MNKNGGPPVANITTSSTTITSTTTTQAKSQLPSSLSVNNLHTTQGSTDQP) are disordered. The segment covering 12–25 (ITTSSTTITSTTTT) has biased composition (low complexity). Residues 26–50 (QAKSQLPSSLSVNNLHTTQGSTDQP) show a composition bias toward polar residues. ATP contacts are provided by residues 133 to 135 (FGS), 146 to 148 (DID), aspartate 200, lysine 262, tyrosine 271, and 280 to 281 (GV). Residues aspartate 146, aspartate 148, and aspartate 200 each coordinate Mg(2+). Disordered stretches follow at residues 529 to 760 (FVKD…QQIQ) and 785 to 809 (ISSS…IRGN). Residues 530–540 (VKDEGPEEPVK) show a composition bias toward basic and acidic residues. The segment covering 572–655 (SPITTNINST…TPPTTTTINS (84 aa)) has biased composition (low complexity). The segment covering 656–665 (VQPPSAQPTE) has biased composition (polar residues). Over residues 666 to 706 (NGSSTSNSPTSTSINNTALPPNPTTNSESTIETTITLPTTL) the composition is skewed to low complexity. A compositionally biased stretch (polar residues) spans 707–735 (ESQTSTLKDSNEISTNGTAVATEPTITSP). 2 stretches are compositionally biased toward low complexity: residues 736–760 (SVNI…QQIQ) and 785–794 (ISSSSETSQS).

This sequence belongs to the poly(A) polymerase family. Mg(2+) serves as cofactor. The cofactor is Mn(2+).

It localises to the nucleus. The catalysed reaction is RNA(n) + ATP = RNA(n)-3'-adenine ribonucleotide + diphosphate. In terms of biological role, polymerase that creates the 3'-poly(A) tail of mRNA's. May acquire specificity through interaction with a cleavage and polyadenylation factor. The sequence is that of Poly(A) polymerase (papA) from Dictyostelium discoideum (Social amoeba).